The sequence spans 233 residues: Small ribosomal subunit protein uS3 (233 aa).

Positions Val-39–Arg-107 constitute a KH type-2 domain.

It belongs to the universal ribosomal protein uS3 family. In terms of assembly, part of the 30S ribosomal subunit. Forms a tight complex with proteins S10 and S14.

Functionally, binds the lower part of the 30S subunit head. Binds mRNA in the 70S ribosome, positioning it for translation. This Hamiltonella defensa subsp. Acyrthosiphon pisum (strain 5AT) protein is Small ribosomal subunit protein uS3.